The primary structure comprises 697 residues: Probable glutamine--tRNA ligase (697 aa).

Positions Pro-204–His-214 match the 'HIGH' region motif. ATP contacts are provided by residues Glu-205 to Asn-207 and His-211 to Ala-217. The L-glutamine site is built by Asp-237 and Tyr-386. ATP contacts are provided by residues Thr-405, Arg-434–Leu-435, and Leu-442–Lys-444. Residues Val-441 to Arg-445 carry the 'KMSKS' region motif.

It belongs to the class-I aminoacyl-tRNA synthetase family.

The enzyme catalyses tRNA(Gln) + L-glutamine + ATP = L-glutaminyl-tRNA(Gln) + AMP + diphosphate. This Encephalitozoon cuniculi (strain GB-M1) (Microsporidian parasite) protein is Probable glutamine--tRNA ligase.